The chain runs to 282 residues: 2-dehydro-3-deoxyphosphooctonate aldolase (282 aa).

The protein belongs to the KdsA family.

It is found in the cytoplasm. It catalyses the reaction D-arabinose 5-phosphate + phosphoenolpyruvate + H2O = 3-deoxy-alpha-D-manno-2-octulosonate-8-phosphate + phosphate. Its pathway is carbohydrate biosynthesis; 3-deoxy-D-manno-octulosonate biosynthesis; 3-deoxy-D-manno-octulosonate from D-ribulose 5-phosphate: step 2/3. It functions in the pathway bacterial outer membrane biogenesis; lipopolysaccharide biosynthesis. This is 2-dehydro-3-deoxyphosphooctonate aldolase from Shewanella oneidensis (strain ATCC 700550 / JCM 31522 / CIP 106686 / LMG 19005 / NCIMB 14063 / MR-1).